A 252-amino-acid chain; its full sequence is Ferritin-2, chloroplastic (252 aa).

The N-terminal 43 residues, 1–43 (MMLRVSSSPAAAVANHLSGGAAATTAPARVTAQRSGVSLSAAA), are a transit peptide targeting the chloroplast. Residues 44–80 (AAGKGKEVLSGVVFQPFEEIKGELALVPQSPDRSLAR) are extension peptide (EP). The region spanning 81–234 (HKFVDDCEAA…KYVAQLRRVG (154 aa)) is the Ferritin-like diiron domain. Fe cation is bound by residues glutamate 98, glutamate 133, histidine 136, glutamate 182, and glutamine 216.

It belongs to the ferritin family. As to quaternary structure, oligomer of 24 subunits. There are two types of subunits: L (light) chain and H (heavy) chain. The major chain can be light or heavy, depending on the species and tissue type. The functional molecule forms a roughly spherical shell with a diameter of 12 nm and contains a central cavity into which the insoluble mineral iron core is deposited. In terms of tissue distribution, ferritins accumulate in seed during maturation. Then, they are degraded during the first days of germination. Present in roots and leaves after iron treatment.

It localises to the plastid. Its subcellular location is the chloroplast. The catalysed reaction is 4 Fe(2+) + O2 + 4 H(+) = 4 Fe(3+) + 2 H2O. Functionally, stores iron in a soluble, non-toxic, readily available form. Important for iron homeostasis. Has ferroxidase activity. Iron is taken up in the ferrous form and deposited as ferric hydroxides after oxidation. The chain is Ferritin-2, chloroplastic (FER2) from Zea mays (Maize).